A 178-amino-acid chain; its full sequence is Major non-capsid protein (178 aa).

It belongs to the tenuiviruses NCP family.

The protein resides in the host cytoplasm. Its function is as follows. Induces the formation of large intracellular inclusion body, organized in amorphous and crystalline arrays. Presumably the main cause of the stripe disease observed in host. The chain is Major non-capsid protein from Avena sativa (Oat).